The primary structure comprises 469 residues: MTRPVRTRFAPSPTGFIHLGNIRSALYPWAFARKMKGTFVLRIEDTDVERSSQEAVDAILEGMQWLGLDFDEGPIYQMQRMDRYREVLAQMLEQGLAYPCYMSAEELDALRERQREAGLKPRYDGTWRPEPGKVLPEPPAGVKPVLRFRNPLTGTVVWDDAVKGRVEISNEELDDLVIARPDGTPIYNFCVVVDDMDMNITHVIRGDDHVNNTPRQINILRALGGEPPVYAHLPTVLNEQGEKMSKRHGAMSVMAYRDAGFLPEAVVNYLARLGWSHGDAEIFSREQFVEWFDLEHLGKSPAQYDHSKLSWLNAHYIKEADNARLAALAKPFLDALGIEDAAIATGPALDAVVGLMKDRATTVKEIAEGAAMFYRVPAPDADALAQHVTDAVRPALADLAAALKAADWTKEAVSAALKATLGTHKLKMPQLAMPVRLLVAGTTHTPSIDAVLVLFGRDVVVSRIEAALA.

The 'HIGH' region motif lies at 11-21; that stretch reads PSPTGFIHLGN. The 'KMSKS' region signature appears at 243 to 247; the sequence is KMSKR. Residue Lys246 coordinates ATP.

It belongs to the class-I aminoacyl-tRNA synthetase family. Glutamate--tRNA ligase type 1 subfamily. In terms of assembly, monomer.

The protein localises to the cytoplasm. The enzyme catalyses tRNA(Glu) + L-glutamate + ATP = L-glutamyl-tRNA(Glu) + AMP + diphosphate. Catalyzes the attachment of glutamate to tRNA(Glu) in a two-step reaction: glutamate is first activated by ATP to form Glu-AMP and then transferred to the acceptor end of tRNA(Glu). This chain is Glutamate--tRNA ligase, found in Burkholderia ambifaria (strain MC40-6).